An 863-amino-acid polypeptide reads, in one-letter code: MALPRCTWPNYVWRAVMACLVHRGLGAPLTLCMLGCLLQAGHVLSQKLDDVDPLVATNFGKIRGIKKELNNEILGPVIQFLGVPYAAPPTGERRFQPPEPPSPWSDIRNATQFAPVCPQNIIDGRLPEVMLPVWFTNNLDVVSSYVQDQSEDCLYLNIYVPTEDVKRISKECARKPGKKICRKGGPLTKKQTDDLGDNDGAEDEDIRDSGGPKPVMVYIHGGSYMEGTGNLYDGSVLASYGNVIVITVNYRLGVLGFLSTGDQAAKGNYGLLDLIQALRWTSENIGFFGGDPLRITVFGSGAGGSCVNLLTLSHYSEGNRWSNSTKGLFQRAIAQSGTALSSWAVSFQPAKYARMLATKVGCNVSDTVELVECLQKKPYKELVDQDIQPARYHIAFGPVIDGDVIPDDPQILMEQGEFLNYDIMLGVNQGEGLKFVENIVDSDDGISASDFDFAVSNFVDNLYGYPEGKDVLRETIKFMYTDWADRHNPETRRKTLLALFTDHQWVAPAVATADLHSNFGSPTYFYAFYHHCQTDQVPAWADAAHGDEVPYVLGIPMIGPTELFPCNFSKNDVMLSAVVMTYWTNFAKTGDPNQPVPQDTKFIHTKPNRFEEVAWTRYSQKDQLYLHIGLKPRVKEHYRANKVNLWLELVPHLHNLNDISQYTSTTTKVPSTDITFRPTRKNSVPVTSAFPTAKQDDPKQQPSPFSVDQRDYSTELSVTIAVGASLLFLNILAFAALYYKKDKRRHDVHRRCSPQRTTTNDLTHAQEEEIMSLQMKHTDLDHECESIHPHEVVLRTACPPDYTLAMRRSPDDVPLMTPNTITMIPNTIPGIQPLHTFNTFTGGQNNTLPHPHPHPHSHSTTRV.

The signal sequence occupies residues 1-45; the sequence is MALPRCTWPNYVWRAVMACLVHRGLGAPLTLCMLGCLLQAGHVLS. Topologically, residues 46 to 717 are extracellular; that stretch reads QKLDDVDPLV…DQRDYSTELS (672 aa). N-linked (GlcNAc...) (complex) asparagine glycosylation is present at Asn109. An intrachain disulfide couples Cys117 to Cys153. The interval 183–212 is disordered; that stretch reads KGGPLTKKQTDDLGDNDGAEDEDIRDSGGP. The span at 194 to 206 shows a compositional bias: acidic residues; it reads DLGDNDGAEDEDI. Residues Asn323 and Asn363 are each glycosylated (N-linked (GlcNAc...) (complex) asparagine). Disulfide bonds link Cys362/Cys373 and Cys532/Cys566. Asn567 is a glycosylation site (N-linked (GlcNAc...) asparagine). The segment at 670–708 is disordered; that stretch reads PSTDITFRPTRKNSVPVTSAFPTAKQDDPKQQPSPFSVD. Positions 681 to 690 are enriched in polar residues; sequence KNSVPVTSAF. 2 O-linked (GalNAc...) serine glycosylation sites follow: Ser703 and Ser706. Residues 718–738 traverse the membrane as a helical segment; the sequence is VTIAVGASLLFLNILAFAALY. Residues 739-863 are Cytoplasmic-facing; that stretch reads YKKDKRRHDV…HPHSHSTTRV (125 aa). Positions 842 to 863 are disordered; the sequence is GGQNNTLPHPHPHPHSHSTTRV. Residues 851–863 show a composition bias toward basic residues; that stretch reads PHPHPHSHSTTRV.

Belongs to the type-B carboxylesterase/lipase family. In terms of assembly, interacts with neurexins NRXN1, NRXN2 and NRXN3. Interaction with neurexins is mediated by heparan sulfate glycan modification on neurexin. Interacts with NLGN3. Interacts with AIP1 and PDZRN3. Interacts (via its C-terminus) with DLG4/PSD-95 (via PDZ domain 3). Interacts with GOPC. In terms of tissue distribution, expressed in the blood vessel walls (at protein level). Highly expressed in brain through prenatal stages, and at lower levels in pancreas islet beta cells.

Its subcellular location is the cell membrane. It localises to the postsynaptic density. It is found in the synaptic cleft. The protein resides in the synaptic cell membrane. Functionally, cell surface protein involved in cell-cell-interactions via its interactions with neurexin family members. Plays a role in synapse function and synaptic signal transmission, and probably mediates its effects by recruiting and clustering other synaptic proteins. May promote the initial formation of synapses, but is not essential for this. In vitro, triggers the de novo formation of presynaptic structures. May be involved in specification of excitatory synapses. Required to maintain wakefulness quality and normal synchrony of cerebral cortex activity during wakefulness and sleep. The protein is involved in nervous system development. The polypeptide is Neuroligin-1 (NLGN1) (Homo sapiens (Human)).